Here is a 514-residue protein sequence, read N- to C-terminus: 2,3-bisphosphoglycerate-independent phosphoglycerate mutase (514 aa).

Residues aspartate 14 and serine 64 each contribute to the Mn(2+) site. Serine 64 acts as the Phosphoserine intermediate in catalysis. Substrate-binding positions include histidine 125, 155–156 (RD), arginine 187, arginine 193, 263–266 (RADR), and lysine 336. Mn(2+)-binding residues include aspartate 403, histidine 407, aspartate 444, histidine 445, and histidine 463.

This sequence belongs to the BPG-independent phosphoglycerate mutase family. As to quaternary structure, monomer. Requires Mn(2+) as cofactor.

The enzyme catalyses (2R)-2-phosphoglycerate = (2R)-3-phosphoglycerate. Its pathway is carbohydrate degradation; glycolysis; pyruvate from D-glyceraldehyde 3-phosphate: step 3/5. Catalyzes the interconversion of 2-phosphoglycerate and 3-phosphoglycerate. In Salmonella paratyphi A (strain ATCC 9150 / SARB42), this protein is 2,3-bisphosphoglycerate-independent phosphoglycerate mutase.